The primary structure comprises 328 residues: Olfactory receptor 4A16 (328 aa).

The Extracellular portion of the chain corresponds to Met1–Lys23. Asn6 is a glycosylation site (N-linked (GlcNAc...) asparagine). A helical transmembrane segment spans residues Thr24–Thr47. The Cytoplasmic segment spans residues Ile48 to Ser55. A helical transmembrane segment spans residues Leu56–Pro77. The Extracellular portion of the chain corresponds to Lys78–Gln98. Residues Cys95 and Cys187 are joined by a disulfide bond. Residues Leu99–Tyr118 form a helical membrane-spanning segment. At Asp119–Leu137 the chain is on the cytoplasmic side. A helical transmembrane segment spans residues Val138–Val156. Residues Gln157–Ile193 are Extracellular-facing. Residues Gly194 to Gly217 traverse the membrane as a helical segment. The Cytoplasmic portion of the chain corresponds to Val218–Lys233. Residues Ala234 to Tyr256 traverse the membrane as a helical segment. Residues Val257 to Lys267 lie on the Extracellular side of the membrane. Residues Leu268–Leu287 form a helical membrane-spanning segment. At Arg288–Arg328 the chain is on the cytoplasmic side.

The protein belongs to the G-protein coupled receptor 1 family.

It localises to the cell membrane. Odorant receptor. This chain is Olfactory receptor 4A16 (OR4A16), found in Homo sapiens (Human).